Here is a 339-residue protein sequence, read N- to C-terminus: Large ribosomal subunit protein uL11m (339 aa).

Belongs to the universal ribosomal protein uL11 family.

Its subcellular location is the mitochondrion. This is Large ribosomal subunit protein uL11m (RPL11) from Acanthamoeba castellanii (Amoeba).